Reading from the N-terminus, the 126-residue chain is Lymphocyte antigen 6 complex locus protein G6c (126 aa).

The N-terminal stretch at 1–19 is a signal peptide; the sequence is MKHLLLLTLSALLYCWVSA. One can recognise a UPAR/Ly6 domain in the interval 21 to 112; that stretch reads TRCHSCYKVP…PRPTPALALI (92 aa). 3 disulfides stabilise this stretch: Cys-23/Cys-48, Cys-26/Cys-34, and Cys-40/Cys-66. Asn-89 carries N-linked (GlcNAc...) (high mannose) asparagine glycosylation. Cys-93 and Cys-98 are disulfide-bonded. Ser-100 carries the GPI-anchor amidated serine lipid modification. Residues 101–126 constitute a propeptide, removed in mature form; the sequence is PAPRPTPALALISLTSLAGLGLWLLH.

In terms of assembly, monomer. Post-translationally, N-glycosylated. As to expression, highly expressed at the leading edges of cells, on filopodia.

It localises to the cell membrane. The protein is Lymphocyte antigen 6 complex locus protein G6c (Ly6g6c) of Mus musculus (Mouse).